The primary structure comprises 148 residues: Putative cyclin-dependent kinase inhibitor SPL2 (148 aa).

Residues Ser-59 and Ser-86 each carry the phosphoserine modification.

It localises to the cytoplasmic granule. Its subcellular location is the cytoplasm. Functionally, putative cyclin-dependent kinase (CDK) inhibitor necessary and sufficient for PHO pathway-dependent down-regulation of low-affinity phosphate transport. In Saccharomyces cerevisiae (strain YJM789) (Baker's yeast), this protein is Putative cyclin-dependent kinase inhibitor SPL2 (SPL2).